A 244-amino-acid chain; its full sequence is Inactive chemokine-binding protein (244 aa).

The interval 1 to 79 (MHVPASLQQS…STSVEDVDPP (79 aa)) is disordered. Polar residues predominate over residues 37-53 (QDQTPTNDKICQSVTEI). The segment covering 54–77 (TESESDPDPEVESEDDSTSVEDVD) has biased composition (acidic residues).

It belongs to the orthopoxvirus OPG001 family.

It is found in the host cytoplasm. In terms of biological role, the protein is truncated in this vaccinal strain and presumably inactive, because the lack of signal peptide prevents the protein of being secreted. In the wild-type viruses inhibits host immune defense by binding to host chemokines. Binds host CC chemokines (beta chemokines) such as RANTES with high affinity, but not CXC or C chemokines (alpha and gamma chemokines). This chain is Inactive chemokine-binding protein (OPG001), found in Vaccinia virus (strain Western Reserve) (VACV).